Consider the following 281-residue polypeptide: Pantothenate synthetase (281 aa).

30–37 (MGYLHEGH) provides a ligand contact to ATP. Catalysis depends on H37, which acts as the Proton donor. Residue Q61 coordinates (R)-pantoate. Residue Q61 coordinates beta-alanine. 147 to 150 (GEKD) contributes to the ATP binding site. (R)-pantoate is bound at residue Q153. ATP is bound by residues I176 and 184-187 (KSSR).

Belongs to the pantothenate synthetase family. As to quaternary structure, homodimer.

The protein localises to the cytoplasm. It catalyses the reaction (R)-pantoate + beta-alanine + ATP = (R)-pantothenate + AMP + diphosphate + H(+). It participates in cofactor biosynthesis; (R)-pantothenate biosynthesis; (R)-pantothenate from (R)-pantoate and beta-alanine: step 1/1. Catalyzes the condensation of pantoate with beta-alanine in an ATP-dependent reaction via a pantoyl-adenylate intermediate. This Clostridium botulinum (strain Loch Maree / Type A3) protein is Pantothenate synthetase.